Consider the following 327-residue polypeptide: tRNA-dihydrouridine(20/20a) synthase (327 aa).

FMN contacts are provided by residues 11-13 (PML) and glutamine 63. The Proton donor role is filled by cysteine 93. FMN-binding positions include lysine 132, histidine 165, 205-207 (NGG), and 227-228 (GR).

Belongs to the Dus family. DusA subfamily. FMN serves as cofactor.

The enzyme catalyses 5,6-dihydrouridine(20) in tRNA + NADP(+) = uridine(20) in tRNA + NADPH + H(+). It carries out the reaction 5,6-dihydrouridine(20) in tRNA + NAD(+) = uridine(20) in tRNA + NADH + H(+). It catalyses the reaction 5,6-dihydrouridine(20a) in tRNA + NADP(+) = uridine(20a) in tRNA + NADPH + H(+). The catalysed reaction is 5,6-dihydrouridine(20a) in tRNA + NAD(+) = uridine(20a) in tRNA + NADH + H(+). Its function is as follows. Catalyzes the synthesis of 5,6-dihydrouridine (D), a modified base found in the D-loop of most tRNAs, via the reduction of the C5-C6 double bond in target uridines. Specifically modifies U20 and U20a in tRNAs. The polypeptide is tRNA-dihydrouridine(20/20a) synthase (Vibrio cholerae serotype O1 (strain ATCC 39315 / El Tor Inaba N16961)).